Here is a 192-residue protein sequence, read N- to C-terminus: uncharacterized protein (192 aa).

The protein to M.thermoautotrophicum MTH863.

This is an uncharacterized protein from Methanocaldococcus jannaschii (strain ATCC 43067 / DSM 2661 / JAL-1 / JCM 10045 / NBRC 100440) (Methanococcus jannaschii).